The primary structure comprises 275 residues: Myb/SANT-like DNA-binding domain-containing protein 3 (275 aa).

Positions 13-78 constitute a Myb-like domain; it reads FSELEKSILL…QLKKCWENIK (66 aa). Phosphoserine occurs at positions 96 and 98. Lys154 is covalently cross-linked (Glycyl lysine isopeptide (Lys-Gly) (interchain with G-Cter in SUMO2)). Residues 211-247 are a coiled coil; the sequence is QLIQMNEVHVAKIQQIERECEMAEEEHRIKMEVLNKK. At Ser274 the chain carries Phosphoserine.

This sequence belongs to the MSANTD3 family. As to expression, expressed in brain.

The polypeptide is Myb/SANT-like DNA-binding domain-containing protein 3 (MSANTD3) (Homo sapiens (Human)).